We begin with the raw amino-acid sequence, 218 residues long: N-(5'-phosphoribosyl)anthranilate isomerase (218 aa).

It belongs to the TrpF family.

The enzyme catalyses N-(5-phospho-beta-D-ribosyl)anthranilate = 1-(2-carboxyphenylamino)-1-deoxy-D-ribulose 5-phosphate. It functions in the pathway amino-acid biosynthesis; L-tryptophan biosynthesis; L-tryptophan from chorismate: step 3/5. In Bordetella parapertussis (strain 12822 / ATCC BAA-587 / NCTC 13253), this protein is N-(5'-phosphoribosyl)anthranilate isomerase.